Here is a 484-residue protein sequence, read N- to C-terminus: ATP synthase subunit beta (484 aa).

162 to 169 (GGAGVGKT) provides a ligand contact to ATP.

It belongs to the ATPase alpha/beta chains family. F-type ATPases have 2 components, CF(1) - the catalytic core - and CF(0) - the membrane proton channel. CF(1) has five subunits: alpha(3), beta(3), gamma(1), delta(1), epsilon(1). CF(0) has four main subunits: a(1), b(1), b'(1) and c(9-12).

The protein resides in the cellular thylakoid membrane. The catalysed reaction is ATP + H2O + 4 H(+)(in) = ADP + phosphate + 5 H(+)(out). Functionally, produces ATP from ADP in the presence of a proton gradient across the membrane. The catalytic sites are hosted primarily by the beta subunits. The polypeptide is ATP synthase subunit beta (Synechococcus elongatus (strain ATCC 33912 / PCC 7942 / FACHB-805) (Anacystis nidulans R2)).